Reading from the N-terminus, the 279-residue chain is Acyl-[acyl-carrier-protein]--UDP-N-acetylglucosamine O-acyltransferase (279 aa).

Residues 260 to 279 (AAKEAFQEESVDKEGALVES) are disordered.

This sequence belongs to the transferase hexapeptide repeat family. LpxA subfamily. As to quaternary structure, homotrimer.

It is found in the cytoplasm. It carries out the reaction a (3R)-hydroxyacyl-[ACP] + UDP-N-acetyl-alpha-D-glucosamine = a UDP-3-O-[(3R)-3-hydroxyacyl]-N-acetyl-alpha-D-glucosamine + holo-[ACP]. Its pathway is glycolipid biosynthesis; lipid IV(A) biosynthesis; lipid IV(A) from (3R)-3-hydroxytetradecanoyl-[acyl-carrier-protein] and UDP-N-acetyl-alpha-D-glucosamine: step 1/6. Functionally, involved in the biosynthesis of lipid A, a phosphorylated glycolipid that anchors the lipopolysaccharide to the outer membrane of the cell. The chain is Acyl-[acyl-carrier-protein]--UDP-N-acetylglucosamine O-acyltransferase from Chlamydia abortus (strain DSM 27085 / S26/3) (Chlamydophila abortus).